A 385-amino-acid polypeptide reads, in one-letter code: cAMP-dependent protein kinase, catalytic subunit-like (385 aa).

The 255-residue stretch at 63 to 317 (LERIVTIGKG…TQDVKDHKWF (255 aa)) folds into the Protein kinase domain. ATP is bound by residues 69–77 (IGKGTFGRV) and lysine 92. The active-site Proton acceptor is aspartate 186. The 68-residue stretch at 318–385 (EKVNWDDTLH…QRERDLFAEW (68 aa)) folds into the AGC-kinase C-terminal domain.

Belongs to the protein kinase superfamily. Ser/Thr protein kinase family. cAMP subfamily.

The catalysed reaction is L-seryl-[protein] + ATP = O-phospho-L-seryl-[protein] + ADP + H(+). It catalyses the reaction L-threonyl-[protein] + ATP = O-phospho-L-threonyl-[protein] + ADP + H(+). This Caenorhabditis briggsae protein is cAMP-dependent protein kinase, catalytic subunit-like.